The primary structure comprises 72 residues: Translation initiation factor IF-1 (72 aa).

The region spanning 1 to 72 is the S1-like domain; the sequence is MPKEEVLEFP…TKGRITYRFK (72 aa).

It belongs to the IF-1 family. As to quaternary structure, component of the 30S ribosomal translation pre-initiation complex which assembles on the 30S ribosome in the order IF-2 and IF-3, IF-1 and N-formylmethionyl-tRNA(fMet); mRNA recruitment can occur at any time during PIC assembly.

It is found in the cytoplasm. Functionally, one of the essential components for the initiation of protein synthesis. Stabilizes the binding of IF-2 and IF-3 on the 30S subunit to which N-formylmethionyl-tRNA(fMet) subsequently binds. Helps modulate mRNA selection, yielding the 30S pre-initiation complex (PIC). Upon addition of the 50S ribosomal subunit IF-1, IF-2 and IF-3 are released leaving the mature 70S translation initiation complex. The chain is Translation initiation factor IF-1 from Chelativorans sp. (strain BNC1).